A 190-amino-acid polypeptide reads, in one-letter code: Cytoglobin (190 aa).

The tract at residues 1 to 21 is disordered; it reads MEKVPGDMEIERRERNEELSE. The 150-residue stretch at 18–167 folds into the Globin domain; the sequence is ELSEAERKAV…IYSHVTAAYK (150 aa). A disulfide bridge links C38 with C83. Heme b is bound by residues H81 and H113.

The protein belongs to the globin family. As to quaternary structure, monomeric. Homodimer; disulfide-linked in vitro. Also homooligomeric in vitro. Post-translationally, the formation of an intramolecular disulfide bond between cysteines Cys-38 and Cys-83 specifically enhances the nitrite reductase activity. As to expression, widely expressed (at protein level).

It is found in the cytoplasm. The protein resides in the nucleus. The enzyme catalyses Fe(II)-heme b-[protein] + nitric oxide + O2 = Fe(III)-heme b-[protein] + nitrate. It catalyses the reaction Fe(III)-heme b-[protein] + nitric oxide + H2O = Fe(II)-heme b-[protein] + nitrite + 2 H(+). It carries out the reaction 2 superoxide + 2 H(+) = H2O2 + O2. The catalysed reaction is H2O2 + AH2 = A + 2 H2O. The nitric oxide dioxygenase activity is activated by a reducing system composed of cytochrome b5, its upstream reductase CYB5R3 and NADH. In terms of biological role, probable multifunctional globin with a hexacoordinated heme iron required for the catalysis of various reactions depending on redox condition of the cell as well as oxygen availability. Has a nitric oxide dioxygenase (NOD) activity and is most probably involved in cell-mediated and oxygen-dependent nitric oxide consumption. By scavenging this second messenger may regulate several biological processes including endothelium-mediated vasodilation and vascular tone. Under normoxic conditions functions as a nitric oxide dioxygenase (NOD) but under hypoxic conditions the globin may switch its function to that of a nitrite (NO2) reductase (NiR), generating nitric oxide. Could also have peroxidase and superoxide dismutase activities, detoxifying reactive oxygen species and protecting cells against oxidative stress. Also binds dioxygen with low affinity and could function as an oxygen sensor but has probably no function as a respiratory oxygen carrier. This Rattus norvegicus (Rat) protein is Cytoglobin.